The following is a 263-amino-acid chain: Neurovirulence factor ICP34.5 (263 aa).

The span at 1–14 shows a compositional bias: basic residues; the sequence is MARRRRHRGPRRPR. Positions 1-16 are required for nucleolar localization; the sequence is MARRRRHRGPRRPRPP. Disordered stretches follow at residues 1-128 and 149-190; these read MARR…PFRL and RRAG…PATP. Polar residues predominate over residues 24–35; sequence TAQSQVTSTPNS. A compositionally biased stretch (pro residues) spans 45–58; the sequence is AAPPPPPASGPPPS. Residues 73-83 are compositionally biased toward acidic residues; the sequence is ASDDDDDDDWP. 2 stretches are compositionally biased toward pro residues: residues 84–93 and 119–128; these read DSPPPEPAPE and SHPPSRPFRL. Positions 128-137 match the Nuclear export signal motif; that stretch reads LPPRLALRLR. 10 repeat units span residues 161–163, 164–166, 167–169, 170–172, 173–175, 176–178, 179–181, 182–184, 185–187, and 188–190. The interval 161–190 is 10 X 3 AA tandem repeats of A-T-P; sequence ATPATPATPATPATPATPATPATPATPATP. A compositionally biased stretch (low complexity) spans 164 to 190; it reads ATPATPATPATPATPATPATPATPATP. The segment at 190–203 is interaction with host PPP1CA; the sequence is PARVRFSPHVRVRH. The tract at residues 205–263 is important for interferon resistance; it reads VVWASAARLARRGSWARERADRARFRRRVAEAEAVIGPCLGPEARARALARGAGPANSV. Residues 215–233 carry the Bipartite nuclear localization signal motif; it reads RRGSWARERADRARFRRRV. The interaction with host EIF2S1/EIF-2ALPHA stretch occupies residues 233–248; it reads VAEAEAVIGPCLGPEA.

The protein belongs to the PPP1R15 family. Interacts with host PPP1CA; this interaction to forms a high-molecular-weight complex that dephosphorylates EIF2S1/eIF-2alpha. Interacts with host EIF2S1/eIF-2alpha; this interaction is crucial for the specific dephosphorylation of EIF2S1/eIF-2alpha by PPP1CA. Binds to proliferating cell nuclear antigen (PCNA), which may release host cells from growth arrest and facilitate viral replication. Interacts (via N-terminus) with host C1QBP; this interaction allows C1QBP to be recruited to the inner nuclear membrane by ICP34.5. Interacts with host PRKCA. Interacts with protein UL31. Interacts with host STING/TMEM173; this interaction inhibits the intracellular DNA sensing pathway. Interacts with host BECN1; this interaction modulates host autophagy.

The protein resides in the host cytoplasm. It localises to the host nucleus. It is found in the host nucleolus. Its subcellular location is the virion. Inhibits the establishment of the immune response and of the integrated stress response (ISR) in the infected cell. Plays essential roles in viral nuclear egress to mediate capsid transit across the nuclear membrane. Facilitates nuclear egress cooperatively with host C1QBP and protein kinase C/PKC to induce lamin A/C phosphorylation and subsequent reorganization. In turn, lamina disassembles and nuclear egress occurs. Recruits the serine/threonine protein phosphatase PPP1CA/PP1-alpha to dephosphorylate the translation initiation factor EIF2S1/eIF-2alpha, thereby couteracting the host shutoff of protein synthesis involving double-stranded RNA-dependent protein kinase EIF2AK2/PKR. In turn, controls host IRF3 activation and subsequently inhibits host interferon response. Controls the DNA sensing pathway by interacting with and inhibiting host STING/TMEM173. Also down-modulates the host MHC class II proteins cell surface expression. Acts as a neurovirulence factor that has a profound effect on the growth of the virus in central nervous system tissue, by interacting with host BECN1 and thereby antagonizing the host autophagy response. In Human herpesvirus 1 (strain F) (HHV-1), this protein is Neurovirulence factor ICP34.5 (RL1).